The following is a 1302-amino-acid chain: Zinc finger protein 536 (1302 aa).

Residues 1–26 (MEEASLCLGVSSTAPEAEPHLSGPVL) form a disordered region. 7 C2H2-type zinc fingers span residues 130–152 (YPCP…MRTH), 158–180 (FKCP…LRTH), 274–297 (FRCT…RILH), 300–323 (YKCT…EKAH), 345–367 (FRCE…MRKH), 373–395 (HCCQ…MKVH), and 631–653 (TECP…SRVH). The segment at 650–736 (SRVHKRDRKS…IGEEAGRAGG (87 aa)) is disordered. Over residues 657–676 (RKSDEDALHVGVGLEERRGS) the composition is skewed to basic and acidic residues. Residues 677 to 698 (GSDQESQSVSRSTTPGSSNVTE) show a composition bias toward polar residues. C2H2-type zinc fingers lie at residues 753-775 (KDCP…LRIH) and 781-803 (YKCP…LERH). Disordered stretches follow at residues 804–832 (HRER…SKAP), 855–897 (GPAS…SKSS), 935–988 (KDTK…APTL), and 1133–1261 (NKNT…GLEK). Phosphoserine is present on residues S828 and S829. A compositionally biased stretch (polar residues) spans 869-883 (GDHSGQATGMPSELS). Positions 935–973 (KDTKDKVPSDAHPMKAHTAEGGEEKASMKPSQRKSEKSQ) are enriched in basic and acidic residues. Composition is skewed to acidic residues over residues 1161–1171 (DLSDIASSEDM) and 1179–1188 (NEDEELDTEP). The segment covering 1198–1212 (LSKDGSSEGGDSLLS) has biased composition (low complexity).

It belongs to the krueppel C2H2-type zinc-finger protein family. In terms of tissue distribution, expressed predominantly in the brain, while a weak signal is also detected in the heart and testis. Expression is abundant in neuronal cells of the cerebral cortex, hippocampus and hypothalamic area (at protein level).

Its subcellular location is the nucleus. Transcriptional repressor that negatively regulates neuron differentiation by repressing retinoic acid-induced gene transcription. Binds and interrupts RARA from binding to retinoic acid response elements (RARE) composed of tandem 5'-AGGTCA-3' sites known as DR1-DR5. Recognizes and binds 2 copies of the core DNA sequence 5'-CCCCCA-3'. The chain is Zinc finger protein 536 (Znf536) from Mus musculus (Mouse).